The primary structure comprises 243 residues: tRNA pseudouridine synthase A (243 aa).

Asp53 serves as the catalytic Nucleophile. Tyr111 provides a ligand contact to substrate.

Belongs to the tRNA pseudouridine synthase TruA family. As to quaternary structure, homodimer.

It catalyses the reaction uridine(38/39/40) in tRNA = pseudouridine(38/39/40) in tRNA. Formation of pseudouridine at positions 38, 39 and 40 in the anticodon stem and loop of transfer RNAs. The chain is tRNA pseudouridine synthase A from Pelodictyon phaeoclathratiforme (strain DSM 5477 / BU-1).